The chain runs to 113 residues: T cell receptor alpha variable 12-2 (113 aa).

Positions 1 to 20 (MKSLRVLLVILWLQLSWVWS) are cleaved as a signal peptide. One can recognise an Ig-like domain in the interval 23–113 (KEVEQNSGPL…DSATYLCAVN (91 aa)). N43 carries an N-linked (GlcNAc...) asparagine glycan. The cysteines at positions 44 and 110 are disulfide-linked.

As to quaternary structure, alpha-beta TR is a heterodimer composed of an alpha and beta chain; disulfide-linked. The alpha-beta TR is associated with the transmembrane signaling CD3 coreceptor proteins to form the TR-CD3 (TcR or TCR). The assembly of alpha-beta TR heterodimers with CD3 occurs in the endoplasmic reticulum where a single alpha-beta TR heterodimer associates with one CD3D-CD3E heterodimer, one CD3G-CD3E heterodimer and one CD247 homodimer forming a stable octameric structure. CD3D-CD3E and CD3G-CD3E heterodimers preferentially associate with TR alpha and TR beta chains, respectively. The association of the CD247 homodimer is the last step of TcR assembly in the endoplasmic reticulum and is required for transport to the cell surface.

It localises to the cell membrane. In terms of biological role, v region of the variable domain of T cell receptor (TR) alpha chain that participates in the antigen recognition. Alpha-beta T cell receptors are antigen specific receptors which are essential to the immune response and are present on the cell surface of T lymphocytes. Recognize peptide-major histocompatibility (MH) (pMH) complexes that are displayed by antigen presenting cells (APC), a prerequisite for efficient T cell adaptive immunity against pathogens. Binding of alpha-beta TR to pMH complex initiates TR-CD3 clustering on the cell surface and intracellular activation of LCK that phosphorylates the ITAM motifs of CD3G, CD3D, CD3E and CD247 enabling the recruitment of ZAP70. In turn ZAP70 phosphorylates LAT, which recruits numerous signaling molecules to form the LAT signalosome. The LAT signalosome propagates signal branching to three major signaling pathways, the calcium, the mitogen-activated protein kinase (MAPK) kinase and the nuclear factor NF-kappa-B (NF-kB) pathways, leading to the mobilization of transcription factors that are critical for gene expression and essential for T cell growth and differentiation. The T cell repertoire is generated in the thymus, by V-(D)-J rearrangement. This repertoire is then shaped by intrathymic selection events to generate a peripheral T cell pool of self-MH restricted, non-autoaggressive T cells. Post-thymic interaction of alpha-beta TR with the pMH complexes shapes TR structural and functional avidity. The chain is T cell receptor alpha variable 12-2 from Homo sapiens (Human).